The sequence spans 88 residues: Protein E7 (88 aa).

The segment at 1 to 37 (MVGEQPNIGDLVSQEEPSVLDLNCYEDIPAEEEESEY) is E7 terminal domain. Positions 22–26 (LNCYE) match the LXCXE motif; interaction with host RB1 and TMEM173/STING motif. A zinc finger spans residues 45 to 81 (CGLCDQLLRLTCVSDLSTLTRLEELLLGSLRIVCPLC). Positions 63 to 71 (LTRLEELLL) match the Nuclear export signal motif.

The protein belongs to the papillomaviridae E7 protein family. In terms of assembly, homodimer. Homooligomer. Interacts with host RB1; this interaction induces dissociation of RB1-E2F1 complex thereby disrupting RB1 activity. Interacts with host EP300; this interaction represses EP300 transcriptional activity. Interacts with protein E2; this interaction inhibits E7 oncogenic activity. Interacts with host TMEM173/STING; this interaction impairs the ability of TMEM173/STING to sense cytosolic DNA and promote the production of type I interferon (IFN-alpha and IFN-beta). Highly phosphorylated.

The protein localises to the host cytoplasm. Its subcellular location is the host nucleus. Its function is as follows. Plays a role in viral genome replication by driving entry of quiescent cells into the cell cycle. Stimulation of progression from G1 to S phase allows the virus to efficiently use the cellular DNA replicating machinery to achieve viral genome replication. E7 protein has both transforming and trans-activating activities. Induces the disassembly of the E2F1 transcription factor from RB1, with subsequent transcriptional activation of E2F1-regulated S-phase genes. Interferes with host histone deacetylation mediated by HDAC1 and HDAC2, leading to transcription activation. Also plays a role in the inhibition of both antiviral and antiproliferative functions of host interferon alpha. Interaction with host TMEM173/STING impairs the ability of TMEM173/STING to sense cytosolic DNA and promote the production of type I interferon (IFN-alpha and IFN-beta). The chain is Protein E7 from Human papillomavirus type 63.